Consider the following 850-residue polypeptide: Bifunctional uridylyltransferase/uridylyl-removing enzyme (850 aa).

Residues 1 to 317 (MSARPFADLR…LFPVVAPPLP (317 aa)) form a uridylyltransferase region. The interval 318–673 (IDDDFQLRAG…ARLSPAGEGI (356 aa)) is uridylyl-removing. An HD domain is found at 436-558 (VDEHILTVLR…VGDTRRLDAL (123 aa)). ACT domains follow at residues 674–755 (QVMV…AVQP) and 783–850 (VLSI…GVLG).

This sequence belongs to the GlnD family. Mg(2+) is required as a cofactor.

It catalyses the reaction [protein-PII]-L-tyrosine + UTP = [protein-PII]-uridylyl-L-tyrosine + diphosphate. It carries out the reaction [protein-PII]-uridylyl-L-tyrosine + H2O = [protein-PII]-L-tyrosine + UMP + H(+). With respect to regulation, uridylyltransferase (UTase) activity is inhibited by glutamine, while glutamine activates uridylyl-removing (UR) activity. Its function is as follows. Modifies, by uridylylation and deuridylylation, the PII regulatory proteins (GlnB and homologs), in response to the nitrogen status of the cell that GlnD senses through the glutamine level. Under low glutamine levels, catalyzes the conversion of the PII proteins and UTP to PII-UMP and PPi, while under higher glutamine levels, GlnD hydrolyzes PII-UMP to PII and UMP (deuridylylation). Thus, controls uridylylation state and activity of the PII proteins, and plays an important role in the regulation of nitrogen assimilation and metabolism. This chain is Bifunctional uridylyltransferase/uridylyl-removing enzyme, found in Thiobacillus denitrificans (strain ATCC 25259 / T1).